An 88-amino-acid chain; its full sequence is Conotoxin VxVIB (88 aa).

The signal sequence occupies residues 1-22 (MNLACVLIVAVLFLTASQLATA). Residues 23-52 (ASYARDKQEYPAVRSSDEMQDSEDLTLTKE) constitute a propeptide that is removed on maturation. Intrachain disulfides connect C53-C68, C60-C72, and C67-C81.

As to expression, expressed by the venom duct.

The protein resides in the secreted. Functionally, may act as a neurotoxin, but produces no obvious effect on ionic currents when tested on the mouse dorsal rooted ganglia (DRG). This is Conotoxin VxVIB from Conus vexillum (Flag cone).